The primary structure comprises 201 residues: 3-isopropylmalate dehydratase small subunit (201 aa).

It belongs to the LeuD family. LeuD type 1 subfamily. Heterodimer of LeuC and LeuD.

It carries out the reaction (2R,3S)-3-isopropylmalate = (2S)-2-isopropylmalate. It functions in the pathway amino-acid biosynthesis; L-leucine biosynthesis; L-leucine from 3-methyl-2-oxobutanoate: step 2/4. In terms of biological role, catalyzes the isomerization between 2-isopropylmalate and 3-isopropylmalate, via the formation of 2-isopropylmaleate. The sequence is that of 3-isopropylmalate dehydratase small subunit from Cytophaga hutchinsonii (strain ATCC 33406 / DSM 1761 / CIP 103989 / NBRC 15051 / NCIMB 9469 / D465).